A 451-amino-acid polypeptide reads, in one-letter code: uncharacterized protein (451 aa).

In terms of domain architecture, TRAM spans 2–60 (VVKVKQKIPLKIKRMGINGEGIGFYQKTLVFVPGALKGENIFCQITAVKRNFAEAKLLT). [4Fe-4S] cluster is bound by residues C73, C79, C82, and C162. S-adenosyl-L-methionine is bound by residues Q283, Y312, D333, and D381. Residue C408 is the Nucleophile of the active site.

The protein belongs to the class I-like SAM-binding methyltransferase superfamily. RNA M5U methyltransferase family.

This is an uncharacterized protein from Streptococcus pyogenes serotype M3 (strain ATCC BAA-595 / MGAS315).